A 284-amino-acid chain; its full sequence is Extracellular metalloprotease VDBG_01143 (284 aa).

Residues 1–18 (MLFKSLFVAAATAVGVSG) form the signal peptide. N-linked (GlcNAc...) asparagine glycosylation is present at asparagine 58. Histidine 200 is a binding site for Zn(2+). Residue glutamate 201 is part of the active site. Histidine 204 is a binding site for Zn(2+). A disulfide bond links cysteine 236 and cysteine 263.

This sequence belongs to the peptidase M43B family.

It localises to the secreted. Secreted metalloproteinase that allows assimilation of proteinaceous substrates. The protein is Extracellular metalloprotease VDBG_01143 of Verticillium alfalfae (strain VaMs.102 / ATCC MYA-4576 / FGSC 10136) (Verticillium wilt of alfalfa).